Here is a 115-residue protein sequence, read N- to C-terminus: NAD(P)H-quinone oxidoreductase subunit M (115 aa).

Belongs to the complex I NdhM subunit family. In terms of assembly, NDH-1 can be composed of about 15 different subunits; different subcomplexes with different compositions have been identified which probably have different functions.

It localises to the cellular thylakoid membrane. It catalyses the reaction a plastoquinone + NADH + (n+1) H(+)(in) = a plastoquinol + NAD(+) + n H(+)(out). The enzyme catalyses a plastoquinone + NADPH + (n+1) H(+)(in) = a plastoquinol + NADP(+) + n H(+)(out). In terms of biological role, NDH-1 shuttles electrons from an unknown electron donor, via FMN and iron-sulfur (Fe-S) centers, to quinones in the respiratory and/or the photosynthetic chain. The immediate electron acceptor for the enzyme in this species is believed to be plastoquinone. Couples the redox reaction to proton translocation, and thus conserves the redox energy in a proton gradient. Cyanobacterial NDH-1 also plays a role in inorganic carbon-concentration. This chain is NAD(P)H-quinone oxidoreductase subunit M, found in Prochlorococcus marinus (strain SARG / CCMP1375 / SS120).